The primary structure comprises 250 residues: tRNA (guanine-N(1)-)-methyltransferase (250 aa).

Residues glycine 114 and 134–139 contribute to the S-adenosyl-L-methionine site; that span reads IGDYVL.

Belongs to the RNA methyltransferase TrmD family. In terms of assembly, homodimer.

The protein localises to the cytoplasm. It carries out the reaction guanosine(37) in tRNA + S-adenosyl-L-methionine = N(1)-methylguanosine(37) in tRNA + S-adenosyl-L-homocysteine + H(+). Its function is as follows. Specifically methylates guanosine-37 in various tRNAs. The polypeptide is tRNA (guanine-N(1)-)-methyltransferase (Moorella thermoacetica (strain ATCC 39073 / JCM 9320)).